We begin with the raw amino-acid sequence, 245 residues long: Acyl-protein thioesterase 1 (245 aa).

Active-site charge relay system residues include serine 126, aspartate 182, and histidine 214.

This sequence belongs to the AB hydrolase superfamily. AB hydrolase 2 family.

The protein localises to the cytoplasm. It localises to the nucleus. The enzyme catalyses S-hexadecanoyl-L-cysteinyl-[protein] + H2O = L-cysteinyl-[protein] + hexadecanoate + H(+). Hydrolyzes fatty acids from S-acylated cysteine residues in proteins with a strong preference for palmitoylated G-alpha proteins over other acyl substrates. Mediates the deacylation of G-alpha proteins such as GPA1 in vivo, but has weak or no activity toward palmitoylated Ras proteins. Has weak lysophospholipase activity in vitro; however such activity may not exist in vivo. This Neurospora crassa (strain ATCC 24698 / 74-OR23-1A / CBS 708.71 / DSM 1257 / FGSC 987) protein is Acyl-protein thioesterase 1.